Consider the following 369-residue polypeptide: Omega-amidase, chloroplastic (369 aa).

The N-terminal 63 residues, 1-63 (MKSAISSSLF…SALRSISSSM (63 aa)), are a transit peptide targeting the chloroplast. At Ala-64 the chain carries N-acetylalanine. The region spanning 88-337 (FNIGLCQLSV…EAIIIAEIDY (250 aa)) is the CN hydrolase domain. Catalysis depends on Glu-127, which acts as the Proton acceptor. Lys-201 functions as the Proton donor in the catalytic mechanism. Residue Cys-242 is the Nucleophile of the active site.

The protein belongs to the nitrilase superfamily. NIT1/NIT2 family.

The protein localises to the plastid. It is found in the chloroplast. The enzyme catalyses a monoamide of a dicarboxylate + H2O = a dicarboxylate + NH4(+). Omega-amidase involved in the metabolism of asparagine. Probably also closely coupled with glutamine transamination in the methionine salvage cycle. Can use alpha-ketosuccinamate and alpha-hydroxysuccinamate as substrates, producing respectively oxaloacetate and malate, or alpha-ketoglutaramate, producing alpha-ketoglutarate. The polypeptide is Omega-amidase, chloroplastic (Arabidopsis thaliana (Mouse-ear cress)).